The chain runs to 588 residues: Sulfite reductase [NADPH] hemoprotein beta-component (588 aa).

Cys-443, Cys-449, Cys-488, and Cys-492 together coordinate [4Fe-4S] cluster. A siroheme-binding site is contributed by Cys-492.

This sequence belongs to the nitrite and sulfite reductase 4Fe-4S domain family. Alpha(8)-beta(8). The alpha component is a flavoprotein, the beta component is a hemoprotein. Siroheme is required as a cofactor. It depends on [4Fe-4S] cluster as a cofactor.

The enzyme catalyses hydrogen sulfide + 3 NADP(+) + 3 H2O = sulfite + 3 NADPH + 4 H(+). It participates in sulfur metabolism; hydrogen sulfide biosynthesis; hydrogen sulfide from sulfite (NADPH route): step 1/1. Functionally, component of the sulfite reductase complex that catalyzes the 6-electron reduction of sulfite to sulfide. This is one of several activities required for the biosynthesis of L-cysteine from sulfate. The protein is Sulfite reductase [NADPH] hemoprotein beta-component of Actinobacillus succinogenes (strain ATCC 55618 / DSM 22257 / CCUG 43843 / 130Z).